A 173-amino-acid chain; its full sequence is T-cell surface glycoprotein CD3 gamma chain (173 aa).

The N-terminal stretch at 1–22 (MEQGKHLAGLILAVFLLQGTMA) is a signal peptide. The Extracellular segment spans residues 23-111 (HVKEVKVDDN…NCIELNPSTV (89 aa)). Residues 24–94 (VKEVKVDDNR…GSNNQSKSLQ (71 aa)) form the Ig-like domain. Cysteine 42 and cysteine 83 are oxidised to a cystine. N-linked (GlcNAc...) asparagine glycosylation is found at asparagine 45 and asparagine 88. The chain crosses the membrane as a helical span at residues 112–132 (AGFIFTEIVSIFLLAVGVYFI). The Cytoplasmic portion of the chain corresponds to 133–173 (AGQEGVRQSRASDKQTLLNNDQLYQPLKEREDDQYSHLRKN). Residue serine 141 is modified to Phosphoserine. Serine 144 is subject to Phosphoserine; by PKC. Positions 145 to 173 (DKQTLLNNDQLYQPLKEREDDQYSHLRKN) constitute an ITAM domain. The short motif at 149 to 150 (LL) is the Di-leucine motif element.

In terms of assembly, the TCR-CD3 complex is composed of a CD3D/CD3E and a CD3G/CD3E heterodimers that preferentially associate with TCRalpha and TCRbeta, respectively, to form TCRalpha/CD3E/CD3G and TCRbeta/CD3G/CD3E trimers. In turn, the hexamer interacts with CD3Z homodimer to form the TCR-CD3 complex. Alternatively, TCRalpha and TCRbeta can be replaced by TCRgamma and TCRdelta. Post-translationally, phosphorylated on Tyr residues after T-cell receptor triggering by LCK in association with CD4/CD8. Phosphorylated also by PKC; leading to the TCR complex down-regulation. Phosphorylated on Tyr residues after T-cell receptor triggering by LCK in association with CD4/CD8.

It localises to the cell membrane. Part of the TCR-CD3 complex present on T-lymphocyte cell surface that plays an essential role in adaptive immune response. When antigen presenting cells (APCs) activate T-cell receptor (TCR), TCR-mediated signals are transmitted across the cell membrane by the CD3 chains CD3D, CD3E, CD3G and CD3Z. All CD3 chains contain immunoreceptor tyrosine-based activation motifs (ITAMs) in their cytoplasmic domain. Upon TCR engagement, these motifs become phosphorylated by Src family protein tyrosine kinases LCK and FYN, resulting in the activation of downstream signaling pathways. In addition to this role of signal transduction in T-cell activation, CD3G plays an essential role in the dynamic regulation of TCR expression at the cell surface. Indeed, constitutive TCR cycling is dependent on the di-leucine-based (diL) receptor-sorting motif present in CD3G. The protein is T-cell surface glycoprotein CD3 gamma chain (CD3G) of Bos taurus (Bovine).